The sequence spans 167 residues: MTKKIAVFPGSFDPFTNGHLDTVKRASRLFDEVVVAAMTNTSKKPLFSSEEKLALISESTAGLPNVKAMAAPKRLTVEFARSIGARFMIRGIRNVADFGYEADIATVNHDLDPEIETVFLLADKQYDALSSTIIKEVAAFGGDVHRFVPAPVEAALYAKLGDAHQTK.

A substrate-binding site is contributed by Ser-11. Residues 11-12 and His-19 contribute to the ATP site; that span reads SF. Substrate-binding residues include Lys-43, Thr-76, and Arg-90. Residues 91–93, Glu-101, and 126–132 each bind ATP; these read GIR and YDALSST.

It belongs to the bacterial CoaD family. Homohexamer. Mg(2+) is required as a cofactor.

Its subcellular location is the cytoplasm. The enzyme catalyses (R)-4'-phosphopantetheine + ATP + H(+) = 3'-dephospho-CoA + diphosphate. The protein operates within cofactor biosynthesis; coenzyme A biosynthesis; CoA from (R)-pantothenate: step 4/5. Reversibly transfers an adenylyl group from ATP to 4'-phosphopantetheine, yielding dephospho-CoA (dPCoA) and pyrophosphate. In Lacticaseibacillus casei (strain BL23) (Lactobacillus casei), this protein is Phosphopantetheine adenylyltransferase.